We begin with the raw amino-acid sequence, 335 residues long: Dihydroorotate dehydrogenase (quinone) (335 aa).

FMN-binding positions include Ala-58–Lys-62 and Thr-82. Residue Lys-62 coordinates substrate. Substrate is bound at residue Asn-107–Phe-111. FMN is bound by residues Asn-135 and Asn-168. Asn-168 provides a ligand contact to substrate. The active-site Nucleophile is Ser-171. Asn-173 serves as a coordination point for substrate. FMN is bound by residues Lys-213 and Gly-241. Asn-242–Thr-243 is a substrate binding site. FMN contacts are provided by residues Gly-264, Gly-293, and Tyr-314 to Ser-315.

The protein belongs to the dihydroorotate dehydrogenase family. Type 2 subfamily. As to quaternary structure, monomer. It depends on FMN as a cofactor.

It is found in the cell membrane. It carries out the reaction (S)-dihydroorotate + a quinone = orotate + a quinol. Its pathway is pyrimidine metabolism; UMP biosynthesis via de novo pathway; orotate from (S)-dihydroorotate (quinone route): step 1/1. In terms of biological role, catalyzes the conversion of dihydroorotate to orotate with quinone as electron acceptor. This Actinobacillus pleuropneumoniae serotype 7 (strain AP76) protein is Dihydroorotate dehydrogenase (quinone).